A 347-amino-acid polypeptide reads, in one-letter code: Ribosomal RNA small subunit methyltransferase C (347 aa).

Belongs to the methyltransferase superfamily. RsmC family. In terms of assembly, monomer.

The protein localises to the cytoplasm. It carries out the reaction guanosine(1207) in 16S rRNA + S-adenosyl-L-methionine = N(2)-methylguanosine(1207) in 16S rRNA + S-adenosyl-L-homocysteine + H(+). Its function is as follows. Specifically methylates the guanine in position 1207 of 16S rRNA in the 30S particle. The chain is Ribosomal RNA small subunit methyltransferase C from Serratia proteamaculans (strain 568).